Here is a 117-residue protein sequence, read N- to C-terminus: Large ribosomal subunit protein bL20 (117 aa).

The protein belongs to the bacterial ribosomal protein bL20 family.

Its function is as follows. Binds directly to 23S ribosomal RNA and is necessary for the in vitro assembly process of the 50S ribosomal subunit. It is not involved in the protein synthesizing functions of that subunit. This chain is Large ribosomal subunit protein bL20, found in Chromohalobacter salexigens (strain ATCC BAA-138 / DSM 3043 / CIP 106854 / NCIMB 13768 / 1H11).